The sequence spans 614 residues: tRNA uridine 5-carboxymethylaminomethyl modification enzyme MnmG (614 aa).

Gly10–Gly15 lines the FAD pocket. Position 271–285 (Gly271–Phe285) interacts with NAD(+).

Belongs to the MnmG family. As to quaternary structure, homodimer. Heterotetramer of two MnmE and two MnmG subunits. Requires FAD as cofactor.

The protein localises to the cytoplasm. Functionally, NAD-binding protein involved in the addition of a carboxymethylaminomethyl (cmnm) group at the wobble position (U34) of certain tRNAs, forming tRNA-cmnm(5)s(2)U34. The polypeptide is tRNA uridine 5-carboxymethylaminomethyl modification enzyme MnmG (Ureaplasma urealyticum serovar 10 (strain ATCC 33699 / Western)).